We begin with the raw amino-acid sequence, 3431 residues long: KICSTOR complex protein SZT2 (3431 aa).

3 disordered regions span residues 699–731, 1067–1101, and 1162–1231; these read SKEP…PQQA, LRDP…TLPS, and KPKL…GADG. Residues 1082-1188 form a mediates interaction with the GATOR1 complex region; that stretch reads VAKDRAGNST…ATGTKATESQ (107 aa). Polar residues-rich tracts occupy residues 1088–1101 and 1182–1212; these read GNST…TLPS and TKAT…TPSC. Position 1275 is a phosphoserine (Ser1275). The disordered stretch occupies residues 1356–1378; sequence PPSPGPLSPGPFSSSIEEGPEPR. At Ser1415 the chain carries Phosphoserine. Disordered regions lie at residues 1512-1534, 1629-1678, 1806-1883, 2113-2148, 2450-2512, 2735-2756, and 2866-2899; these read YRES…SDAD, PPAS…HPGL, RAED…PGET, PPSL…SDAV, TEAG…LEEG, ASPP…GGPL, and ETCA…DVPP. At Thr1640 the chain carries Phosphothreonine. Residues 1641–1657 show a composition bias toward polar residues; sequence SESSASFPRSPGQPSSL. Phosphoserine is present on Ser1650. The segment covering 1832 to 1854 has biased composition (low complexity); sequence PLISLPSLSQGGSQPGPSRGLSL. Positions 2118–2129 are enriched in polar residues; that stretch reads LSRSQEPISSED. A compositionally biased stretch (basic and acidic residues) spans 2460 to 2473; the sequence is TTDDIVLDRPEDTR. Low complexity predominate over residues 2739-2749; sequence LSREQGRLSGS.

As to quaternary structure, part of the KICSTOR complex composed of KPTN, ITFG2, KICS2 and SZT2. SZT2 probably serves as a link between the other three proteins in the KICSTOR complex and may mediate the direct interaction with the GATOR complex via GATOR1. The KICSTOR complex interacts directly with the GATOR1 complex and most probably indirectly with the GATOR2 complex in an amino acid-independent manner. Mostly expressed in brain, spinal cord and lung.

It is found in the lysosome membrane. Its subcellular location is the peroxisome. In terms of biological role, as part of the KICSTOR complex functions in the amino acid-sensing branch of the TORC1 signaling pathway. Recruits, in an amino acid-independent manner, the GATOR1 complex to the lysosomal membranes and allows its interaction with GATOR2 and the RAG GTPases. Functions upstream of the RAG GTPases and is required to negatively regulate mTORC1 signaling in absence of amino acids. In absence of the KICSTOR complex mTORC1 is constitutively localized to the lysosome and activated. The KICSTOR complex is also probably involved in the regulation of mTORC1 by glucose. May play a role in the cellular response to oxidative stress. This is KICSTOR complex protein SZT2 from Mus musculus (Mouse).